A 323-amino-acid polypeptide reads, in one-letter code: Cyclin-dependent kinase 1 (323 aa).

Residues 4 to 306 (YQKIEKIGEG…AKQACMHPYF (303 aa)) form the Protein kinase domain. ATP is bound by residues 10–18 (IGEGTYGVV) and K34. T14 carries the post-translational modification Phosphothreonine. At Y15 the chain carries Phosphotyrosine. Catalysis depends on D147, which acts as the Proton acceptor. At T180 the chain carries Phosphothreonine; by CAK.

It belongs to the protein kinase superfamily. CMGC Ser/Thr protein kinase family. CDC2/CDKX subfamily. Forms a stable but non-covalent complex with a regulatory subunit (SUC1) and with a cyclin.

It carries out the reaction L-seryl-[protein] + ATP = O-phospho-L-seryl-[protein] + ADP + H(+). It catalyses the reaction L-threonyl-[protein] + ATP = O-phospho-L-threonyl-[protein] + ADP + H(+). With respect to regulation, phosphorylation at Thr-14 or Tyr-15 inactivates the enzyme, while phosphorylation at Thr-180 activates it. In terms of biological role, cyclin-dependent kinase that acts as a master regulator of the mitotic and meiotic cell cycles. This is Cyclin-dependent kinase 1 from Emericella nidulans (strain FGSC A4 / ATCC 38163 / CBS 112.46 / NRRL 194 / M139) (Aspergillus nidulans).